The following is a 254-amino-acid chain: Dihydroorotate dehydrogenase B (NAD(+)), electron transfer subunit (254 aa).

Residues 1-99 (MLQTEMKVIQ…LGPLGKGFDL (99 aa)) enclose the FAD-binding FR-type domain. FAD contacts are provided by residues 50-53 (RPIS), 67-69 (LYR), and 74-75 (GT). Cys-218, Cys-223, Cys-226, and Cys-241 together coordinate [2Fe-2S] cluster.

The protein belongs to the PyrK family. Heterotetramer of 2 PyrK and 2 PyrD type B subunits. [2Fe-2S] cluster serves as cofactor. The cofactor is FAD.

It participates in pyrimidine metabolism; UMP biosynthesis via de novo pathway; orotate from (S)-dihydroorotate (NAD(+) route): step 1/1. Responsible for channeling the electrons from the oxidation of dihydroorotate from the FMN redox center in the PyrD type B subunit to the ultimate electron acceptor NAD(+). The polypeptide is Dihydroorotate dehydrogenase B (NAD(+)), electron transfer subunit (Listeria innocua serovar 6a (strain ATCC BAA-680 / CLIP 11262)).